Here is a 542-residue protein sequence, read N- to C-terminus: Amino-acid acetyltransferase, mitochondrial (542 aa).

The N-terminal 14 residues, 1–14 (MLFRRLLTTKVGYH), are a transit peptide targeting the mitochondrion. One can recognise an N-acetyltransferase domain in the interval 368–534 (AGSAQLPAHK…LREYITYVRD (167 aa)).

It belongs to the acetyltransferase family.

The protein resides in the mitochondrion. It carries out the reaction L-glutamate + acetyl-CoA = N-acetyl-L-glutamate + CoA + H(+). It functions in the pathway amino-acid biosynthesis; L-arginine biosynthesis; N(2)-acetyl-L-ornithine from L-glutamate: step 1/4. In terms of biological role, N-acetylglutamate synthase involved in arginine biosynthesis. This chain is Amino-acid acetyltransferase, mitochondrial (ARG2), found in Eremothecium gossypii (strain ATCC 10895 / CBS 109.51 / FGSC 9923 / NRRL Y-1056) (Yeast).